A 349-amino-acid polypeptide reads, in one-letter code: Hydroxymethylglutaryl-CoA synthase (349 aa).

Positions 29 and 30 each coordinate (3S)-3-hydroxy-3-methylglutaryl-CoA. Residue glutamate 81 is the Proton donor/acceptor of the active site. (3S)-3-hydroxy-3-methylglutaryl-CoA-binding residues include cysteine 113 and threonine 154. The active-site Acyl-thioester intermediate is cysteine 113. Arginine 202 contributes to the CoA binding site. 2 residues coordinate (3S)-3-hydroxy-3-methylglutaryl-CoA: threonine 204 and histidine 237. Histidine 237 (proton donor/acceptor) is an active-site residue. Lysine 242 is a binding site for CoA. The (3S)-3-hydroxy-3-methylglutaryl-CoA site is built by lysine 246, asparagine 269, and serine 299.

Belongs to the thiolase-like superfamily. Archaeal HMG-CoA synthase family. As to quaternary structure, interacts with acetoacetyl-CoA thiolase that catalyzes the precedent step in the pathway and with a DUF35 protein. The acetoacetyl-CoA thiolase/HMG-CoA synthase complex channels the intermediate via a fused CoA-binding site, which allows for efficient coupling of the endergonic thiolase reaction with the exergonic HMGCS reaction.

The catalysed reaction is acetoacetyl-CoA + acetyl-CoA + H2O = (3S)-3-hydroxy-3-methylglutaryl-CoA + CoA + H(+). It participates in metabolic intermediate biosynthesis; (R)-mevalonate biosynthesis; (R)-mevalonate from acetyl-CoA: step 2/3. In terms of biological role, catalyzes the condensation of acetyl-CoA with acetoacetyl-CoA to form 3-hydroxy-3-methylglutaryl-CoA (HMG-CoA). Functions in the mevalonate (MVA) pathway leading to isopentenyl diphosphate (IPP), a key precursor for the biosynthesis of isoprenoid compounds that are building blocks of archaeal membrane lipids. The chain is Hydroxymethylglutaryl-CoA synthase from Methanosarcina acetivorans (strain ATCC 35395 / DSM 2834 / JCM 12185 / C2A).